The sequence spans 143 residues: uncharacterized protein (143 aa).

It belongs to the OsmC/Ohr family.

This is an uncharacterized protein from Acinetobacter baylyi (strain ATCC 33305 / BD413 / ADP1).